The primary structure comprises 269 residues: Formamidopyrimidine-DNA glycosylase (269 aa).

The active-site Schiff-base intermediate with DNA is the Pro-2. The active-site Proton donor is the Glu-3. The active-site Proton donor; for beta-elimination activity is Lys-57. His-90, Arg-109, and Lys-150 together coordinate DNA. The FPG-type zinc-finger motif lies at 235–269 (QVYGRAGELCRRCGNVIEIAKHGQRSTFFCRHCQH). Catalysis depends on Arg-259, which acts as the Proton donor; for delta-elimination activity.

Belongs to the FPG family. Monomer. Zn(2+) serves as cofactor.

The enzyme catalyses Hydrolysis of DNA containing ring-opened 7-methylguanine residues, releasing 2,6-diamino-4-hydroxy-5-(N-methyl)formamidopyrimidine.. The catalysed reaction is 2'-deoxyribonucleotide-(2'-deoxyribose 5'-phosphate)-2'-deoxyribonucleotide-DNA = a 3'-end 2'-deoxyribonucleotide-(2,3-dehydro-2,3-deoxyribose 5'-phosphate)-DNA + a 5'-end 5'-phospho-2'-deoxyribonucleoside-DNA + H(+). Functionally, involved in base excision repair of DNA damaged by oxidation or by mutagenic agents. Acts as a DNA glycosylase that recognizes and removes damaged bases. Has a preference for oxidized purines, such as 7,8-dihydro-8-oxoguanine (8-oxoG). Has AP (apurinic/apyrimidinic) lyase activity and introduces nicks in the DNA strand. Cleaves the DNA backbone by beta-delta elimination to generate a single-strand break at the site of the removed base with both 3'- and 5'-phosphates. The protein is Formamidopyrimidine-DNA glycosylase of Yersinia enterocolitica serotype O:8 / biotype 1B (strain NCTC 13174 / 8081).